Reading from the N-terminus, the 37-residue chain is Small ribosomal subunit protein eS32 (37 aa).

This sequence belongs to the eukaryotic ribosomal protein eS32 family. In terms of assembly, part of the small ribosomal subunit.

Functionally, interacts with N(4)-acetylcytidine (ac(4)C) 1459 of the small rRNA; the acetyl group of ac(4)C1459 briges the interaction with this protein. This chain is Small ribosomal subunit protein eS32 (rpl41e), found in Thermococcus kodakarensis (strain ATCC BAA-918 / JCM 12380 / KOD1) (Pyrococcus kodakaraensis (strain KOD1)).